A 283-amino-acid polypeptide reads, in one-letter code: Glutamate racemase (283 aa).

Substrate contacts are provided by residues 28-29 and 60-61; these read DS and YG. The Proton donor/acceptor role is filled by Cys92. A substrate-binding site is contributed by 93–94; that stretch reads NT. Residue Cys204 is the Proton donor/acceptor of the active site. A substrate-binding site is contributed by 205-206; it reads TH.

Belongs to the aspartate/glutamate racemases family.

The enzyme catalyses L-glutamate = D-glutamate. Its pathway is cell wall biogenesis; peptidoglycan biosynthesis. In terms of biological role, provides the (R)-glutamate required for cell wall biosynthesis. The protein is Glutamate racemase of Salmonella gallinarum (strain 287/91 / NCTC 13346).